Reading from the N-terminus, the 861-residue chain is Importin subunit beta-1 (861 aa).

An N-acetylserine modification is found at serine 2. HEAT repeat units follow at residues 3–35 (TAEFAQLLENSILSPDQNIRLTSETQLKKLSND), 37–66 (FLQFAGLSSQVLIDENTKLEGRILAALTLK), 90–129 (PEAKNQIKTNALTALVSIEPRIANAAAQLIAAIADIELPH), 134–164 (ELMKIMVDNTGAEQPENVKRASLLALGYMCE), 177–208 (SNNILIAIVQGAQSTETSKAVRLAALNALADS), 219–255 (EGERNYLMQVVCEATQAEDIEVQAAAFGCLCKIMSLY), 260–306 (KPYM…ELAQ), 317–362 (FALS…AQNC), 367–395 (LEPVLEFVEQNITADNWRNREAAVMAFGS), 402–442 (KVQR…ADSV), 452–484 (LPGVVQACLIGLQDHPKVATNCSWTIINLVEQL), 496–530 (YPALVDGLIGAANRIDNEFNARASAFSALTTMVEY), 536–586 (AETS…VIRK), 592–629 (EPVADMLMGLFFRLLEKKDSAFIEDDVFYAISALAASL), 634–669 (EKYLETFSPYLLKALNQVDSPVSITAVGFIADISNS), 675–713 (RRYSDAMMNVLAQMISNPNARRELKPAVLSVFGDIASNI), 718–764 (IPYL…IVAG), 773–812 (FPYVGTIFQFIAQVAEDPQLYSEDATSRAAVGLIGDIAAM), and 819–859 (KQFY…KRQL). Positions 25–106 (SETQLKKLSN…KTNALTALVS (82 aa)) constitute an Importin N-terminal domain. Serine 836 bears the Phosphoserine mark.

Belongs to the importin beta family. Importin beta-1 subfamily. In terms of assembly, forms a complex with the importin alpha subunit (SRP1/KAP60). Interacts with Ran (GSP1); interacts specifically with the GTP-bound form of Ran (GTP-Ran), protecting it from GTP hydrolysis and nucleotide exchange. Interacts with nucleoporin NUP1.

The protein resides in the cytoplasm. Its subcellular location is the nucleus. The protein localises to the nuclear pore complex. Importin beta subunit that functions in nuclear protein import through association with the importin alpha subunit, which binds to the classical nuclear localization signal (cNLS) in cargo substrates. Docking of the importin/substrate complex to the nuclear pore complex (NPC) is mediated by importin beta through binding to nucleoporin FxFG repeats and the complex is subsequently translocated through the pore by an energy requiring, Ran-dependent mechanism. At the nucleoplasmic side of the NPC, GTP-Ran binds to importin beta and the three components separate, leading to release of the cargo. Importin alpha and beta are re-exported from the nucleus to the cytoplasm where GTP hydrolysis releases Ran from importin beta. The directionality of nuclear import is thought to be conferred by an asymmetric distribution of the GTP- and GDP-bound forms of Ran between the cytoplasm and nucleus. Mediates the nuclear import of histones H2A and H2B. Mediates the nuclear import of transcription factor GCN4. This chain is Importin subunit beta-1, found in Saccharomyces cerevisiae (strain ATCC 204508 / S288c) (Baker's yeast).